The sequence spans 158 residues: NADH-quinone oxidoreductase subunit B (158 aa).

Residues C37, C38, C102, and C132 each coordinate [4Fe-4S] cluster.

The protein belongs to the complex I 20 kDa subunit family. NDH-1 is composed of 14 different subunits. Subunits NuoB, C, D, E, F, and G constitute the peripheral sector of the complex. [4Fe-4S] cluster serves as cofactor.

Its subcellular location is the cell inner membrane. It carries out the reaction a quinone + NADH + 5 H(+)(in) = a quinol + NAD(+) + 4 H(+)(out). Its function is as follows. NDH-1 shuttles electrons from NADH, via FMN and iron-sulfur (Fe-S) centers, to quinones in the respiratory chain. Couples the redox reaction to proton translocation (for every two electrons transferred, four hydrogen ions are translocated across the cytoplasmic membrane), and thus conserves the redox energy in a proton gradient. The sequence is that of NADH-quinone oxidoreductase subunit B from Aromatoleum aromaticum (strain DSM 19018 / LMG 30748 / EbN1) (Azoarcus sp. (strain EbN1)).